A 324-amino-acid polypeptide reads, in one-letter code: Heat-inducible transcription repressor HrcA (324 aa).

It belongs to the HrcA family.

In terms of biological role, negative regulator of class I heat shock genes (grpE-dnaK-dnaJ and groELS operons). Prevents heat-shock induction of these operons. The chain is Heat-inducible transcription repressor HrcA from Parasynechococcus marenigrum (strain WH8102).